Consider the following 643-residue polypeptide: Cytoplasmic dynein 1 intermediate chain 1 (643 aa).

Basic and acidic residues-rich tracts occupy residues 1-13 (MSDKSDLKAELER) and 20-60 (QIRE…RETE). 2 disordered regions span residues 1–65 (MSDK…LLQS) and 96–123 (MSPSSKSVSTPSEAGSQDDLGPLTRTLQ). Serine 2 is modified (N-acetylserine). An interaction with DCTN1 region spans residues 2 to 123 (SDKSDLKAEL…DLGPLTRTLQ (122 aa)). Phosphoserine is present on residues serine 50 and serine 100. A compositionally biased stretch (low complexity) spans 96-107 (MSPSSKSVSTPS). Position 105 is a phosphothreonine (threonine 105). Residues serine 107 and serine 111 each carry the phosphoserine modification. The interval 145 to 161 (KLGVSKVTQVDFLPREV) is interaction with DYNLT1. Residues 167 to 219 (ETQTPLATHQSEEDEEDEEMVEPKVGHDSELENQDKKQETKEAPPRELTEEEK) are disordered. Threonine 174 is modified (phosphothreonine). 2 positions are modified to phosphoserine: serine 177 and serine 195. The span at 187–219 (VEPKVGHDSELENQDKKQETKEAPPRELTEEEK) shows a compositional bias: basic and acidic residues. WD repeat units lie at residues 283-332 (SKHR…TTPE), 336-376 (HCQS…RTPV), 385-426 (AHTH…TPQE), 435-475 (SKPV…AGIG), 480-525 (GHQG…PLYS), 528-568 (DNAD…EVPT), and 574-613 (EGAYALNRVRWAQGGKEVAVGDSEGRIWIYDVGELAVPHN). Position 633 is a phosphoserine (serine 633).

Belongs to the dynein intermediate chain family. As to quaternary structure, homodimer. The cytoplasmic dynein 1 complex consists of two catalytic heavy chains (HCs) and a number of non-catalytic subunits presented by intermediate chains (ICs), light intermediate chains (LICs) and light chains (LCs); the composition seems to vary in respect to the IC, LIC and LC composition. The heavy chain homodimer serves as a scaffold for the probable homodimeric assembly of the respective non-catalytic subunits. The ICs and LICs bind directly to the HC dimer and the LCs assemble on the IC dimer. Isoform 1, isoform 2 and isoform 3 interact with DYNC1H1. Isoform 1, isoform 2 and isoform 3 interact with DYNLT3. Isoform 1, isoform 2 and isoform 3 interact with DYNLT1. Interacts with DCTN1. Interacts with MCRS1; the interaction is required for the proper distribution of centriolar satellites. High levels seen in the brain and testis, while a lower level expression is seen in the liver, spleen, kidney, lung, skeletal muscle and heart.

The protein resides in the cytoplasm. It is found in the chromosome. It localises to the centromere. Its subcellular location is the kinetochore. The protein localises to the cytoskeleton. The protein resides in the spindle pole. Functionally, acts as one of several non-catalytic accessory components of the cytoplasmic dynein 1 complex that are thought to be involved in linking dynein to cargos and to adapter proteins that regulate dynein function. Cytoplasmic dynein 1 acts as a motor for the intracellular retrograde motility of vesicles and organelles along microtubules. The intermediate chains mediate the binding of dynein to dynactin via its 150 kDa component (p150-glued) DCTN1. May play a role in mediating the interaction of cytoplasmic dynein with membranous organelles and kinetochores. The sequence is that of Cytoplasmic dynein 1 intermediate chain 1 (Dync1i1) from Rattus norvegicus (Rat).